Here is an 877-residue protein sequence, read N- to C-terminus: Alanine--tRNA ligase (877 aa).

Zn(2+)-binding residues include His-566, His-570, Cys-668, and His-672.

The protein belongs to the class-II aminoacyl-tRNA synthetase family. It depends on Zn(2+) as a cofactor.

The protein localises to the cytoplasm. The catalysed reaction is tRNA(Ala) + L-alanine + ATP = L-alanyl-tRNA(Ala) + AMP + diphosphate. Functionally, catalyzes the attachment of alanine to tRNA(Ala) in a two-step reaction: alanine is first activated by ATP to form Ala-AMP and then transferred to the acceptor end of tRNA(Ala). Also edits incorrectly charged Ser-tRNA(Ala) and Gly-tRNA(Ala) via its editing domain. The sequence is that of Alanine--tRNA ligase from Staphylococcus aureus (strain USA300 / TCH1516).